The sequence spans 116 residues: Beta-2-microglobulin (116 aa).

Residues 1 to 19 (MRALITFALLCLLYITVQG) form the signal peptide. An Ig-like C1-type domain is found at 24–111 (PKVHVYSHFP…RHMKETKKFS (88 aa)). C44 and C99 are joined by a disulfide.

This sequence belongs to the beta-2-microglobulin family. As to quaternary structure, heterodimer of an alpha chain and a beta chain. Beta-2-microglobulin is the beta-chain of major histocompatibility complex class I molecules.

Its subcellular location is the secreted. Functionally, component of the class I major histocompatibility complex (MHC). Involved in the presentation of peptide antigens to the immune system. This chain is Beta-2-microglobulin (b2m), found in Danio rerio (Zebrafish).